A 982-amino-acid polypeptide reads, in one-letter code: Mitochondrial DNA mismatch repair protein mutS homolog (982 aa).

698-705 (SVNGAGKS) lines the ATP pocket. In terms of domain architecture, HNH spans 905 to 951 (CEICGAPADAVHHIKPKSEHKKLCNRKLNRRSNLVPVCSSCHLDIHR).

Belongs to the DNA mismatch repair MutS family.

It localises to the mitochondrion. Its function is as follows. May be involved in DNA-mismatch repair. The sequence is that of Mitochondrial DNA mismatch repair protein mutS homolog from Sarcophyton glaucum (Toadstool umbrella leather coral).